The following is a 59-amino-acid chain: MAVPRNRHSNARKNIRRSHHAKKACSGAVCNNCKQVFIPHTVCASCGFYKGKAVVTVEK.

Residues 1–20 form a disordered region; sequence MAVPRNRHSNARKNIRRSHH.

The protein belongs to the bacterial ribosomal protein bL32 family.

The sequence is that of Large ribosomal subunit protein bL32 (rpmF) from Chlamydia muridarum (strain MoPn / Nigg).